Here is a 105-residue protein sequence, read N- to C-terminus: ATP synthase subunit c (105 aa).

Transmembrane regions (helical) follow at residues 3–23 (FLAL…GGMG), 32–52 (SILG…IGMG), and 78–98 (VAMA…IIAI).

This sequence belongs to the ATPase C chain family. In terms of assembly, F-type ATPases have 2 components, F(1) - the catalytic core - and F(0) - the membrane proton channel. F(1) has five subunits: alpha(3), beta(3), gamma(1), delta(1), epsilon(1). F(0) has three main subunits: a(1), b(2) and c(10-14). The alpha and beta chains form an alternating ring which encloses part of the gamma chain. F(1) is attached to F(0) by a central stalk formed by the gamma and epsilon chains, while a peripheral stalk is formed by the delta and b chains.

The protein localises to the cell inner membrane. Its function is as follows. F(1)F(0) ATP synthase produces ATP from ADP in the presence of a proton or sodium gradient. F-type ATPases consist of two structural domains, F(1) containing the extramembraneous catalytic core and F(0) containing the membrane proton channel, linked together by a central stalk and a peripheral stalk. During catalysis, ATP synthesis in the catalytic domain of F(1) is coupled via a rotary mechanism of the central stalk subunits to proton translocation. Key component of the F(0) channel; it plays a direct role in translocation across the membrane. A homomeric c-ring of between 10-14 subunits forms the central stalk rotor element with the F(1) delta and epsilon subunits. The chain is ATP synthase subunit c from Helicobacter pylori (strain P12).